The primary structure comprises 437 residues: MTHYATVICGGGPAGVSAVVAAAVQGRLEEFLDRGVLLVEATGRAGSGSIPHYGIRANSLGSAFLECLDGPAGSGLLAGLADSAEARELRGWADEYPPLPVVGAFLTLVGERVVDALRRHPRCDALLGHRVVEVRTGPERATVLLSGPDGELSHTGDRVLLTMGGRERTELAPDALAALVERRPGLRVLSSGEVITDPSWHPDAASPHRALGSIAVLGGAHSAWAVAAHLARLARAGWFAGPVEVTVVERRLPPIFYFSAAEARAEGYRWDEADVCGPSGRVHRFGGLRGPARELARQVMGLAAEKAPDGFGQVVLDGPWTAEALEAAVGDADLVITALGYDARLPRLLGADGRELELARPRGAVDTGRDGLPGLAAGGRAERLVMYGLGAGLVPSEETGGEPGYRGRLDGVWVYQHDIGAVILRALLANDRTEDGR.

FAD serves as cofactor.

The catalysed reaction is CMP-5'-(3-aminopropyl)phosphonate + NADPH + O2 = CMP-5'-(N-hydroxy-3-aminopropyl)phosphonate + NADP(+) + H2O. The protein operates within antibiotic biosynthesis. In terms of biological role, hydroxylase involved in the biosynthesis of the phosphonate antibiotic FR-900098, a potent antimalarial agent that acts as an inhibitor of 1-deoxy-D-xylulose 5-phosphate reductoisomerase (DXR), the first enzyme in the nonmevalonate pathway for isoprenoid biosynthesis. Catalyzes the N-hydroxylation of CMP-5'-3-aminopropylphosphonate (CMP-5'-3APn) to CMP-5'-(N-hydroxy-3-aminopropyl)phosphonate (CMP-5'-H3APn). Cannot use CMP-5'-N-acetyl-3-aminopropylphosphonate (CMP-5'-Ac3APn) as a substrate. The polypeptide is CMP-5'-(3-aminopropyl)phosphonate hydroxylase (Streptomyces rubellomurinus (strain ATCC 31215)).